A 112-amino-acid chain; its full sequence is Tetracenomycin-F1 monooxygenase (112 aa).

In terms of domain architecture, ABM spans 11–100; sequence FTLVNVFGVA…SRPKPIFCEV (90 aa).

In terms of assembly, homotrimer.

It carries out the reaction tetracenomycin F1 + O2 = tetracenomycin D3 + H2O + H(+). The protein operates within antibiotic biosynthesis; tetracenomycin C biosynthesis. With respect to regulation, inhibited by p-chloromercuribenzoic acid, N-ethylmaleimide and diethyl pyrocarbonate. Its function is as follows. Oxygenase required for conversion of tetracenomycin F1 to tetracenomycin D3. This chain is Tetracenomycin-F1 monooxygenase (tcmH), found in Streptomyces glaucescens.